A 448-amino-acid chain; its full sequence is Protein chibby homolog 2 (448 aa).

A phosphoserine mark is found at S41, S86, S89, S97, S124, S144, S148, and S150. Positions 164–198 (KECMLQEENKSLREENKALREENRMLSKENKILQV) form a coiled coil. A phosphoserine mark is found at S212 and S225. Residues 242–267 (KEDSTLQLLREENRALQQLLEQKQAY) adopt a coiled-coil conformation. The disordered stretch occupies residues 270-323 (QAEDTAAPAEESKPAPSPHEEPCSPGLLQDQGSGLSSRFEEPKGPPARQEDSKE). Basic and acidic residues-rich tracts occupy residues 279–291 (EESK…HEEP) and 307–323 (RFEE…DSKE). 2 positions are modified to phosphoserine: S335 and S338. The stretch at 356–414 (LQLLREMRQALQALLKENRLLQEENRTLQVLRAEHRGFQEENKALWENNKLKLQQKLVI) forms a coiled coil.

The protein belongs to the chibby family. SPERT subfamily. In terms of assembly, homodimer. Binds to NEK1. Testis-specific.

In Homo sapiens (Human), this protein is Protein chibby homolog 2.